Reading from the N-terminus, the 365-residue chain is tRNA(Met) cytidine acetate ligase (365 aa).

Residues 7-20 (IAEFNPFHNGHKYL), glycine 96, asparagine 152, and arginine 175 contribute to the ATP site.

It belongs to the TmcAL family.

Its subcellular location is the cytoplasm. It carries out the reaction cytidine(34) in elongator tRNA(Met) + acetate + ATP = N(4)-acetylcytidine(34) in elongator tRNA(Met) + AMP + diphosphate. Functionally, catalyzes the formation of N(4)-acetylcytidine (ac(4)C) at the wobble position of elongator tRNA(Met), using acetate and ATP as substrates. First activates an acetate ion to form acetyladenylate (Ac-AMP) and then transfers the acetyl group to tRNA to form ac(4)C34. This chain is tRNA(Met) cytidine acetate ligase, found in Streptococcus pneumoniae serotype 19F (strain G54).